Here is a 414-residue protein sequence, read N- to C-terminus: tRNA methyltransferase 10 homolog C (414 aa).

Residues 1–35 (MNVTVRFLRPFARCLVPYTFHRKRSHLYSGVLQRY) constitute a mitochondrion transit peptide. Residue Ser79 is modified to Phosphoserine. Positions 133–171 (GKEKAKKAKQVKKEMKAEAREEAKRARLLETTAEEQQQD) form a coiled coil. The SAM-dependent MTase TRM10-type domain maps to 186–378 (LGWKGVQAMQ…KFVPRRKHTG (193 aa)).

This sequence belongs to the class IV-like SAM-binding methyltransferase superfamily. TRM10 family. As to quaternary structure, component of mitochondrial ribonuclease P, a complex composed of TRMT10C/MRPP1, HSD17B10/MRPP2 and PRORP/MRPP3. Interacts with HSD17B10/MRPP2; forming the MRPP1-MRPP2 subcomplex of the mitochondrial ribonuclease P complex. Interacts with GRSF1.

It is found in the mitochondrion matrix. The protein resides in the mitochondrion nucleoid. The catalysed reaction is adenosine(9) in tRNA + S-adenosyl-L-methionine = N(1)-methyladenosine(9) in tRNA + S-adenosyl-L-homocysteine + H(+). The enzyme catalyses guanosine(9) in tRNA + S-adenosyl-L-methionine = N(1)-methylguanosine(9) in tRNA + S-adenosyl-L-homocysteine + H(+). It carries out the reaction an adenosine in mRNA + S-adenosyl-L-methionine = an N(1)-methyladenosine in mRNA + S-adenosyl-L-homocysteine + H(+). Functionally, mitochondrial tRNA N(1)-methyltransferase involved in mitochondrial tRNA maturation. Component of mitochondrial ribonuclease P, a complex composed of TRMT10C/MRPP1, HSD17B10/MRPP2 and PRORP/MRPP3, which cleaves tRNA molecules in their 5'-ends. Together with HSD17B10/MRPP2, forms a subcomplex of the mitochondrial ribonuclease P, named MRPP1-MRPP2 subcomplex, which displays functions that are independent of the ribonuclease P activity. The MRPP1-MRPP2 subcomplex catalyzes the formation of N(1)-methylguanine and N(1)-methyladenine at position 9 (m1G9 and m1A9, respectively) in tRNAs; TRMT10C/MRPP1 acting as the catalytic N(1)-methyltransferase subunit. The MRPP1-MRPP2 subcomplex also acts as a tRNA maturation platform: following 5'-end cleavage by the mitochondrial ribonuclease P complex, the MRPP1-MRPP2 subcomplex enhances the efficiency of 3'-processing catalyzed by ELAC2, retains the tRNA product after ELAC2 processing and presents the nascent tRNA to the mitochondrial CCA tRNA nucleotidyltransferase TRNT1 enzyme. In addition to tRNA N(1)-methyltransferase activity, TRMT10C/MRPP1 also acts as a mRNA N(1)-methyltransferase by mediating methylation of adenosine residues at the N(1) position of MT-ND5 mRNA. Associates with mitochondrial DNA complexes at the nucleoids to initiate RNA processing and ribosome assembly. The sequence is that of tRNA methyltransferase 10 homolog C from Mus musculus (Mouse).